The chain runs to 434 residues: Putative neutral sphingomyelinase (434 aa).

Glu-83 serves as a coordination point for Mg(2+). The active-site Proton acceptor is the His-318. 2 consecutive transmembrane segments (helical) span residues 366–388 (IFFF…FEVF) and 392–414 (FAVL…LIGL).

Belongs to the neutral sphingomyelinase family.

It localises to the membrane. The catalysed reaction is an N-(acyl)-sphingosylphosphocholine + H2O = an N-acyl-sphingoid base + phosphocholine + H(+). The enzyme catalyses a sphingomyelin + H2O = phosphocholine + an N-acylsphing-4-enine + H(+). It catalyses the reaction an N-acyl-15-methylhexadecasphing-4-enine-1-phosphocholine + H2O = an N-acyl-15-methylhexadecasphing-4-enine + phosphocholine + H(+). Its pathway is lipid metabolism; sphingolipid metabolism. In terms of biological role, catalyzes the hydrolysis of sphingomyelin producing a ceramide (N-acyl-sphingoid base) and a phosphocholine. C.elegans contain specific sphingoid bases, which are unique or different in structure compared to the sphingoid bases found in other animals. Two examples of these distinctive compounds are: 15-methylhexadecasphinganine and 15-methylhexadecasphing-4-enine. This Caenorhabditis elegans protein is Putative neutral sphingomyelinase.